The primary structure comprises 863 residues: Leucine--tRNA ligase (863 aa).

The 'HIGH' region signature appears at 42–52; that stretch reads PYPSGRLHMGH. Residues 618–622 carry the 'KMSKS' region motif; that stretch reads KMSKS. Lys-621 contacts ATP.

It belongs to the class-I aminoacyl-tRNA synthetase family.

It localises to the cytoplasm. It catalyses the reaction tRNA(Leu) + L-leucine + ATP = L-leucyl-tRNA(Leu) + AMP + diphosphate. The chain is Leucine--tRNA ligase from Colwellia psychrerythraea (strain 34H / ATCC BAA-681) (Vibrio psychroerythus).